Reading from the N-terminus, the 290-residue chain is Glycine--tRNA ligase alpha subunit (290 aa).

The protein belongs to the class-II aminoacyl-tRNA synthetase family. In terms of assembly, tetramer of two alpha and two beta subunits.

It is found in the cytoplasm. The catalysed reaction is tRNA(Gly) + glycine + ATP = glycyl-tRNA(Gly) + AMP + diphosphate. The sequence is that of Glycine--tRNA ligase alpha subunit from Syntrophobacter fumaroxidans (strain DSM 10017 / MPOB).